Reading from the N-terminus, the 476-residue chain is Proton-coupled amino acid transporter 1 (476 aa).

Over residues 1 to 15 the composition is skewed to basic and acidic residues; the sequence is MSTQRLRNEDYHDYS. Positions 1–32 are disordered; the sequence is MSTQRLRNEDYHDYSSTDVSPEESPSEGLNNL. Over 1–51 the chain is Cytoplasmic; it reads MSTQRLRNEDYHDYSSTDVSPEESPSEGLNNLSSPGSYQRFGQSNSTTWFQ. Residues 52–72 form a helical membrane-spanning segment; that stretch reads TLIHLLKGNIGTGLLGLPLAV. Residues 73–78 lie on the Extracellular side of the membrane; the sequence is KNAGIV. A helical membrane pass occupies residues 79-99; the sequence is MGPISLLIIGIVAVHCMGILV. Over 100–141 the chain is Cytoplasmic; the sequence is KCAHHFCRRLNKSFVDYGDTVMYGLESSPCSWLRNHAHWGRR. A helical transmembrane segment spans residues 142–162; the sequence is VVDFFLIVTQLGFCCVYFVFL. At 163-190 the chain is on the extracellular side; it reads ADNFKQVIEAANGTTNNCHNNETVILTP. Residues asparagine 174 and asparagine 183 are each glycosylated (N-linked (GlcNAc...) asparagine). A disulfide bridge connects residues cysteine 180 and cysteine 329. Residues 191-211 form a helical membrane-spanning segment; sequence TMDSRLYMLSFLPFLVLLVFI. Residues 212 to 215 lie on the Cytoplasmic side of the membrane; sequence RNLR. A helical transmembrane segment spans residues 216–236; that stretch reads ALSIFSLLANITMLVSLVMIY. Residues 237–257 are Extracellular-facing; sequence QFIVQRIPDPSHLPLVAPWKT. Residues 258–278 traverse the membrane as a helical segment; the sequence is YPLFFGTAIFSFEGIGMVLPL. The Cytoplasmic segment spans residues 279 to 289; that stretch reads ENKMKDPRKFP. Residues 290–310 traverse the membrane as a helical segment; it reads LILYLGMVIVTILYISLGCLG. Residues 311-342 lie on the Extracellular side of the membrane; sequence YLQFGANIQGSITLNLPNCWLYQSVKLLYSIG. A helical transmembrane segment spans residues 343–363; that stretch reads IFFTYALQFYVPAEIIIPFFV. Residues 364–372 lie on the Cytoplasmic side of the membrane; that stretch reads SRAPEHCEL. The chain crosses the membrane as a helical span at residues 373–393; that stretch reads VVDLFVRTVLVCLTCILAILI. Topologically, residues 394–397 are extracellular; it reads PRLD. A helical membrane pass occupies residues 398–418; that stretch reads LVISLVGSVSSSALALIIPPL. Over 419–439 the chain is Cytoplasmic; sequence LEVTTFYSEGMSPLTIFKDAL. The chain crosses the membrane as a helical span at residues 440-460; it reads ISILGFVGFVVGTYEALYELI. Residues 461–476 lie on the Extracellular side of the membrane; it reads QPSNAPIFINSTCAFI. Asparagine 470 is a glycosylation site (N-linked (GlcNAc...) asparagine).

It belongs to the amino acid/polyamine transporter 2 family.

Its subcellular location is the cell membrane. It localises to the apical cell membrane. It is found in the lysosome membrane. The catalysed reaction is glycine(in) + H(+)(in) = glycine(out) + H(+)(out). It carries out the reaction L-alanine(in) + H(+)(in) = L-alanine(out) + H(+)(out). The enzyme catalyses D-alanine(in) + H(+)(in) = D-alanine(out) + H(+)(out). It catalyses the reaction L-proline(out) + H(+)(out) = L-proline(in) + H(+)(in). The catalysed reaction is D-proline(out) + H(+)(out) = D-proline(in) + H(+)(in). It carries out the reaction D-serine(out) + H(+)(out) = D-serine(in) + H(+)(in). The enzyme catalyses L-serine(in) + H(+)(in) = L-serine(out) + H(+)(out). It catalyses the reaction 4-aminobutanoate(in) + H(+)(in) = 4-aminobutanoate(out) + H(+)(out). The catalysed reaction is beta-alanine(in) + H(+)(in) = beta-alanine(out) + H(+)(out). Its function is as follows. Electrogenic proton/amino acid symporter with selectivity for small apolar L-amino acids, their D-enantiomers and selected amino acid derivatives such as 4-aminobutanoate/GABA. May be involved in the efflux from the lysosomal compartment of neutral amino acids resulting from proteolysis. May play a role in specifying sites for exocytosis in neurons. The protein is Proton-coupled amino acid transporter 1 of Homo sapiens (Human).